The chain runs to 226 residues: Transmembrane gamma-carboxyglutamic acid protein 4 (226 aa).

Residues 1–17 (MFTLLVLLSQLPTVTLG) form the signal peptide. The propeptide occupies 18-49 (FPHCARGPKASKHAGEEVFTSKEEANFFIHRR). Over 50-113 (LLYNRFDLEL…KSDGNREKID (64 aa)) the chain is Extracellular. A Gla domain is found at 52-98 (YNRFDLELFTPGNLERECNEELCNYEEAREIFVDEDKTIAFWQEYSA). Cysteine 69 and cysteine 74 are joined by a disulfide. Glutamate 72 is modified (4-carboxyglutamate). The chain crosses the membrane as a helical span at residues 114 to 134 (VMGLLTGLIAAGVFLVIFGLL). Residues 135-226 (GYYLCITKCN…FKKSMSLPSH (92 aa)) are Cytoplasmic-facing. Position 163 is a phosphoserine (serine 163). The LPXY motif; mediates binding to WW domain-containing proteins motif lies at 186–189 (LPSY). The short motif at 204–207 (PPPY) is the PPXY motif; mediates binding to WW domain-containing proteins element.

This sequence belongs to the commissureless family. As to quaternary structure, interacts (via cytoplasmic domain) with WW domain-containing proteins MAGI1, MAGI3, NEDD4, NEDD4L, WWTR1/TAZ and YAP1. Post-translationally, gamma-carboxyglutamate residues are formed by vitamin K dependent carboxylation. These residues are essential for the binding of calcium. As to expression, widely expressed with highest levels in kidney.

Its subcellular location is the endoplasmic reticulum-Golgi intermediate compartment membrane. It is found in the cell membrane. Functionally, may control axon guidance across the CNS. Prevents the delivery of ROBO1 at the cell surface and down-regulates its expression. The polypeptide is Transmembrane gamma-carboxyglutamic acid protein 4 (Homo sapiens (Human)).